Here is a 1408-residue protein sequence, read N- to C-terminus: Transcription elongation factor SPT6 (1408 aa).

Positions 1 to 199 (MSNSMRDLIS…DAEVARPRDR (199 aa)) are disordered. 4 stretches are compositionally biased toward acidic residues: residues 13-24 (AELDDEEEDESF), 39-51 (DSSE…DDEE), 61-75 (IVDE…GESD), and 95-104 (AQLDEDDLDL). Over residues 127–141 (GTRDEDRGNQRRGLD) the composition is skewed to basic and acidic residues. Residues 168 to 184 (EFDDFIEEDFPDDPEEL) are compositionally biased toward acidic residues. Residues 185–199 (EQQREDAEVARPRDR) show a composition bias toward basic and acidic residues. Residues 1101–1168 (GMIVPVNVRV…KDFMAKLSMR (68 aa)) enclose the S1 motif domain. The region spanning 1213–1314 (VKHPNFKPFN…RKVEELMRHD (102 aa)) is the SH2 domain.

This sequence belongs to the SPT6 family.

The protein resides in the nucleus. It is found in the chromosome. Histone H3-H4 chaperone that plays a role in maintenance of chromatin structure during RNA polymerase II transcription elongation thereby repressing transcription initiation from cryptic promoters. Mediates the reassembly of nucleosomes onto the promoters of at least a selected set of genes during repression; the nucleosome reassembly is essential for transcriptional repression. Essential for viability. This Gibberella zeae (strain ATCC MYA-4620 / CBS 123657 / FGSC 9075 / NRRL 31084 / PH-1) (Wheat head blight fungus) protein is Transcription elongation factor SPT6 (SPT6).